Consider the following 299-residue polypeptide: Probable GTP 3',8-cyclase (299 aa).

The region spanning 4-229 is the Radical SAM core domain; sequence LHNREIKSLR…MQNRKKYLVD (226 aa). Arg-13 contributes to the GTP binding site. Positions 20 and 24 each coordinate [4Fe-4S] cluster. Tyr-26 is a binding site for S-adenosyl-L-methionine. A [4Fe-4S] cluster-binding site is contributed by Cys-27. Lys-61 contacts GTP. Residue Gly-65 coordinates S-adenosyl-L-methionine. Thr-94 lines the GTP pocket. Ser-118 is an S-adenosyl-L-methionine binding site. Lys-154 lines the GTP pocket. Cys-245 and Cys-248 together coordinate [4Fe-4S] cluster. 250 to 252 contacts GTP; that stretch reads RIR. [4Fe-4S] cluster is bound at residue Cys-262.

This sequence belongs to the radical SAM superfamily. MoaA family. [4Fe-4S] cluster is required as a cofactor.

The catalysed reaction is GTP + AH2 + S-adenosyl-L-methionine = (8S)-3',8-cyclo-7,8-dihydroguanosine 5'-triphosphate + 5'-deoxyadenosine + L-methionine + A + H(+). It participates in cofactor biosynthesis; molybdopterin biosynthesis. Its function is as follows. Catalyzes the cyclization of GTP to (8S)-3',8-cyclo-7,8-dihydroguanosine 5'-triphosphate. The sequence is that of Probable GTP 3',8-cyclase from Methanococcus aeolicus (strain ATCC BAA-1280 / DSM 17508 / OCM 812 / Nankai-3).